Consider the following 263-residue polypeptide: 3-methyl-2-oxobutanoate hydroxymethyltransferase (263 aa).

2 residues coordinate Mg(2+): aspartate 45 and aspartate 84. Residues 45 to 46, aspartate 84, and lysine 112 contribute to the 3-methyl-2-oxobutanoate site; that span reads DS. A Mg(2+)-binding site is contributed by glutamate 114. Glutamate 181 functions as the Proton acceptor in the catalytic mechanism.

This sequence belongs to the PanB family. In terms of assembly, homodecamer; pentamer of dimers. It depends on Mg(2+) as a cofactor.

It localises to the cytoplasm. The catalysed reaction is 3-methyl-2-oxobutanoate + (6R)-5,10-methylene-5,6,7,8-tetrahydrofolate + H2O = 2-dehydropantoate + (6S)-5,6,7,8-tetrahydrofolate. It participates in cofactor biosynthesis; (R)-pantothenate biosynthesis; (R)-pantoate from 3-methyl-2-oxobutanoate: step 1/2. Functionally, catalyzes the reversible reaction in which hydroxymethyl group from 5,10-methylenetetrahydrofolate is transferred onto alpha-ketoisovalerate to form ketopantoate. The polypeptide is 3-methyl-2-oxobutanoate hydroxymethyltransferase (Proteus mirabilis (strain HI4320)).